Reading from the N-terminus, the 358-residue chain is Peptide chain release factor 1 (358 aa).

Glutamine 233 is modified (N5-methylglutamine).

This sequence belongs to the prokaryotic/mitochondrial release factor family. Methylated by PrmC. Methylation increases the termination efficiency of RF1.

The protein resides in the cytoplasm. Functionally, peptide chain release factor 1 directs the termination of translation in response to the peptide chain termination codons UAG and UAA. The protein is Peptide chain release factor 1 of Staphylococcus epidermidis (strain ATCC 35984 / DSM 28319 / BCRC 17069 / CCUG 31568 / BM 3577 / RP62A).